The following is a 62-amino-acid chain: Conotoxin TeAr151 (62 aa).

A signal peptide spans 1–22 (MRCLPVFVVLLLLIASAPSVDA). The propeptide occupies 23–47 (QPKTKDDVPLAPLHDNIQNTLQTLR). Met55 is subject to Methionine sulfoxide; partial. Position 60 is a serine amide (Ser60).

It belongs to the conotoxin T superfamily. In terms of processing, contains 2 disulfide bonds. Post-translationally, contains 2 disulfide bonds that can be either 'C1-C3, C2-C4' or 'C1-C4, C2-C3', since these disulfide connectivities have been observed for conotoxins with cysteine framework V (for examples, see AC P0DQQ7 and AC P81755).. As to expression, expressed by the venom duct. Is mostly present in part 5 of the venom duct (distal part near the pharynx), and less abundantly present in part 4 of the venom duct.

The protein resides in the secreted. This Conus textile (Cloth-of-gold cone) protein is Conotoxin TeAr151.